Consider the following 389-residue polypeptide: Probable nitrate transporter NarT (389 aa).

Transmembrane regions (helical) follow at residues 14–34 (TLSL…MPFI), 45–65 (ISII…PFGY), 69–89 (IVGA…PIFF), 97–117 (GMLM…SVGV), 139–159 (GNIG…IIGW), 161–181 (TTVR…FIFG), 211–231 (WYFI…NYLV), 246–266 (GVFI…GDKF), 268–288 (AVKV…ILGI), 294–314 (LFTV…GLIF), 331–351 (IVSM…TYVA), and 353–373 (LTGS…IALF).

Belongs to the major facilitator superfamily. Nitrate/nitrite porter (TC 2.A.1.8) family.

Its subcellular location is the cell membrane. Its function is as follows. Probably required for nitrate uptake under anoxic conditions. Also possibly involved in excretion of nitrite produced by the dissimilatory reduction of nitrate. The chain is Probable nitrate transporter NarT (narT) from Staphylococcus aureus (strain USA300).